We begin with the raw amino-acid sequence, 338 residues long: E3 ubiquitin-protein ligase RING1 (338 aa).

The tract at residues 102 to 124 (TTTSSSASIDPNNPSLSGPTRSG) is disordered. Positions 110 to 121 (IDPNNPSLSGPT) are enriched in polar residues. Residues 224 to 265 (CAVCMDDFEEGTEAKQMPCKHLYHKDCLLPWLELHNSCPVCR) form an RING-type; atypical zinc finger. Composition is skewed to basic and acidic residues over residues 267 to 279 (ELPT…ERRV) and 298 to 309 (SDGDNRTVERSF). The interval 267-338 (ELPTDDPDYE…NAETRQEDLD (72 aa)) is disordered.

Auto-ubiquitinated as part of the enzymatic reaction. In terms of tissue distribution, mostly expressed in cotton fibers, and, to a lower extent, in leaves and flowers.

It carries out the reaction S-ubiquitinyl-[E2 ubiquitin-conjugating enzyme]-L-cysteine + [acceptor protein]-L-lysine = [E2 ubiquitin-conjugating enzyme]-L-cysteine + N(6)-ubiquitinyl-[acceptor protein]-L-lysine.. It participates in protein modification; protein ubiquitination. In terms of biological role, E3 ubiquitin-protein ligase which accepts ubiquitin from an E2 ubiquitin-conjugating enzyme in the form of a thioester and then directly transfers the ubiquitin to targeted substrates. Promotes polyubiquitination of target proteins. In Gossypium hirsutum (Upland cotton), this protein is E3 ubiquitin-protein ligase RING1 (RING1).